We begin with the raw amino-acid sequence, 127 residues long: Large ribosomal subunit protein bL17 (127 aa).

This sequence belongs to the bacterial ribosomal protein bL17 family. As to quaternary structure, part of the 50S ribosomal subunit. Contacts protein L32.

The polypeptide is Large ribosomal subunit protein bL17 (Pediococcus pentosaceus (strain ATCC 25745 / CCUG 21536 / LMG 10740 / 183-1w)).